A 383-amino-acid chain; its full sequence is uncharacterized protein (383 aa).

Belongs to the peptidase M20 family.

This is an uncharacterized protein from Staphylococcus epidermidis (strain ATCC 12228 / FDA PCI 1200).